The following is an 87-amino-acid chain: NADH dehydrogenase [ubiquinone] 1 alpha subcomplex subunit 4-like 2 (87 aa).

This sequence belongs to the complex I NDUFA4 subunit family.

The chain is NADH dehydrogenase [ubiquinone] 1 alpha subcomplex subunit 4-like 2 (Ndufa4l2) from Mus musculus (Mouse).